The chain runs to 307 residues: Transmembrane and coiled-coil domain-containing protein 5B (307 aa).

Positions 20 to 212 form a coiled coil; the sequence is TLEAIKQNLK…SKAQNDSSQV (193 aa). The helical transmembrane segment at 246-268 threads the bilayer; that stretch reads YLFFMVMIVIRLLGYVFFHLQYV.

It belongs to the TMCO5 family.

Its subcellular location is the membrane. The protein is Transmembrane and coiled-coil domain-containing protein 5B (Tmco5b) of Mus musculus (Mouse).